The chain runs to 224 residues: Large ribosomal subunit protein uL3 (224 aa).

Glutamine 158 is subject to N5-methylglutamine.

The protein belongs to the universal ribosomal protein uL3 family. As to quaternary structure, part of the 50S ribosomal subunit. Forms a cluster with proteins L14 and L19. Methylated by PrmB.

Its function is as follows. One of the primary rRNA binding proteins, it binds directly near the 3'-end of the 23S rRNA, where it nucleates assembly of the 50S subunit. This Paracidovorax citrulli (strain AAC00-1) (Acidovorax citrulli) protein is Large ribosomal subunit protein uL3.